The sequence spans 213 residues: Achelase-1 (213 aa).

Residues 1-213 (IVGGSVTTIG…RYTSWIQSNA (213 aa)) form the Peptidase S1 domain. Cysteine 26 and cysteine 42 form a disulfide bridge. Residues histidine 41 and aspartate 86 each act as charge relay system in the active site. Cysteine 155 and cysteine 172 are disulfide-bonded. Serine 188 acts as the Charge relay system in catalysis.

Belongs to the peptidase S1 family. As to expression, hemolymph and saliva of the larval form (caterpillar).

It localises to the secreted. The protein localises to the extracellular space. Sensitive to serine proteinase inhibitors and thiol proteinase inhibitors. Functionally, fibrinolytic activity; shows preferential cleavage of Arg-Gly bonds in all three fibrinogen chains. Contact with the caterpillars causes severe bleeding, due the anticoagulant effect of the protein. In Lonomia achelous (Giant silkworm moth), this protein is Achelase-1.